We begin with the raw amino-acid sequence, 134 residues long: Agouti-related protein (134 aa).

Positions 1–20 (MLTAVLLSCALLLAMPPLQG) are cleaved as a signal peptide. Residues 21–84 (AQMGPAPLEG…VLDPEGRKPR (64 aa)) constitute a propeptide that is removed on maturation. Intrachain disulfides connect Cys89-Cys104, Cys96-Cys110, Cys103-Cys121, Cys107-Cys131, and Cys112-Cys119. Positions 89–131 (CVRLHESCLGHQVPCCDPCATCYCRFFNAFCYCRKLGTTTNPC) constitute an Agouti domain. An interaction with melanocortin receptors region spans residues 113–115 (RFF).

In terms of assembly, interacts with melanocortin receptors MC3R, MC4R and MC5R.

The protein localises to the secreted. The protein resides in the golgi apparatus lumen. In terms of biological role, plays a role in weight homeostasis. Involved in the control of feeding behavior through the central melanocortin system. Acts as alpha melanocyte-stimulating hormone antagonist by inhibiting cAMP production mediated by stimulation of melanocortin receptors within the hypothalamus and adrenal gland. Has very low activity with MC5R. Is an inverse agonist for MC3R and MC4R being able to suppress their constitutive activity. It promotes MC3R and MC4R endocytosis in an arrestin-dependent manner. The protein is Agouti-related protein (AGRP) of Bos taurus (Bovine).